The following is a 412-amino-acid chain: Allantoate amidohydrolase (412 aa).

His-84, Asp-95, Glu-130, and His-193 together coordinate Zn(2+). Allantoate-binding residues include Arg-218, Asn-278, and Arg-291. His-385 serves as a coordination point for Zn(2+).

Belongs to the peptidase M20 family. As to quaternary structure, homodimer. Zn(2+) serves as cofactor.

It localises to the cytoplasm. The catalysed reaction is allantoate + H2O + 2 H(+) = (S)-2-ureidoglycine + NH4(+) + CO2. The protein operates within nitrogen metabolism; (S)-allantoin degradation. Involved in the anaerobic nitrogen utilization via the assimilation of allantoin. Catalyzes specifically the hydrolysis of allantoate to yield CO2, NH3 and S-ureidoglycine, which is unstable and readily undergoes a second deamination by S-ureidoglycine aminohydrolase AllE to yield S-ureidoglycolate and NH3. This Bacillus subtilis (strain 168) protein is Allantoate amidohydrolase.